We begin with the raw amino-acid sequence, 679 residues long: MESTSQDRRATHVITIKPNETVLTAFPYRPHSSLLDFLKGEPRVLGATQILLALIIVGFGTIFALNYIGFSQRLPLVVLTGYPFWGALIFILTGYLTVTDKKSKLLGQGVTGMNVISSLVAITGITFTILSYRHQDKYCQMPSFEEICVFSRTLFIVLFFLPSDVTQNSEQPAPEENDQLQFVLQEEFSSDDSTTNAQSVIFGGYAFFKLTLSRSPLVSQPGNKGREFVPDEQKQSILPSPKFSEEEIEPLPPTLEKKPSENMSIQLDSTFKQMKDEDLQSAIVQPSQMQTKLLQDQAASLQVFPSHSALKLEDISPEDLPSQALPVEGLSEQTMPSKSTSSHVKQSSNLTANDLPPQGILSQDTSSQDMLFHDMTSQDMQSLDMLSQDTPSHAMPPQDIPSQDMLSQALSAHAILPEASTSHIVQFPEIQHLLQQPPDLQPENTEPQNQQILQMSYQDIRSEVMEETKEWKSEEELHRRKSSRRHSLNQQTKALQYLRRHSLDVQAKGQKSSKRHSLDQQSKGWQSPKQKSLDQQIKDWLSPKRHSVDKQAQLNQTKEQLPDQQAEDQQAKGEQYPEGQSKDGQVKDQQTDKEQNSKKQTQDQQTEDQPAQEKKSPKGQFQNVQAEGQQAQVEKVPKLLCQDSESQIQQYQFWQFHKGNLQAGQPRTVNLLAKNPLTG.

The next 4 helical transmembrane spans lie at Ile-50–Phe-70, Leu-76–Leu-96, Val-110–Leu-130, and Met-141–Leu-161. Disordered regions lie at residues Val-218–Pro-259, Ser-331–Gln-363, Lys-469–Gln-491, and Val-505–Val-633. Residues Lys-224–Lys-234 are compositionally biased toward basic and acidic residues. Positions Ser-337–Ser-348 are enriched in low complexity. A compositionally biased stretch (basic and acidic residues) spans Lys-469 to His-478. Polar residues-rich tracts occupy residues Asp-519 to Gln-535 and Lys-550 to Asp-563. A compositionally biased stretch (basic and acidic residues) spans Gln-580–Thr-601. The segment covering Gly-619–Gln-632 has biased composition (polar residues).

It belongs to the MS4A family.

The protein localises to the membrane. May be involved in signal transduction as a component of a multimeric receptor complex. The protein is Membrane-spanning 4-domains subfamily A member 14 (MS4A14) of Homo sapiens (Human).